A 613-amino-acid polypeptide reads, in one-letter code: Autophagy-related protein 22-2 (613 aa).

The tract at residues 1–28 is disordered; sequence MVLNSTPPASPGAEAQQRPPRYPGEDTA. The chain crosses the membrane as a helical span at residues 41-61; that stretch reads YGIAAEVFAVCGVGSFLPLTL. Over residues 80-96 the composition is skewed to polar residues; the sequence is GSSSPSTAPGNGTTTAT. The segment at 80–99 is disordered; that stretch reads GSSSPSTAPGNGTTTATLRR. A glycan (N-linked (GlcNAc...) asparagine) is linked at Asn-90. Transmembrane regions (helical) follow at residues 120–140, 155–177, and 189–209; these read SFAMYTFSLAVLVQALTLISF, LAFGFIGSMTSMLFIFIAPPVYI, and CLGSSFVVLNSFLPVLVANDP. Residues 216 to 257 form a disordered region; sequence KEEGEELSPVNSSGEFARSEDLDEENVRDSDDHFTTGHGLKT. N-linked (GlcNAc...) asparagine glycosylation occurs at Asn-226. Basic and acidic residues predominate over residues 232-250; that stretch reads ARSEDLDEENVRDSDDHFT. Transmembrane regions (helical) follow at residues 278 to 298, 307 to 327, 382 to 402, and 418 to 438; these read VGLGYCAAVLVQILSILMLFA, ISGTLPMRFVLLLVGIWWFSF, VIVFLIAWFLLSDAMATVSGT, and VGLLSITATLSGMAGAFLWPV. A glycan (N-linked (GlcNAc...) asparagine) is linked at Asn-448. 4 helical membrane-spanning segments follow: residues 453–473, 488–510, 522–544, and 553–573; these read LCIALFEVIPLYGMLAYIPLF, FPLGIVHGLVSGGLSSYCRSFFG, YALYAATDKGSSFIGPAIVGMLI, and GFFFIAVLILLPIPLIWMVNA. The disordered stretch occupies residues 592-613; sequence GEHASEYGGPSEEAEGLLARDI.

Belongs to the ATG22 family.

It localises to the vacuole membrane. Its function is as follows. Vacuolar effluxer which mediate the efflux of amino acids resulting from autophagic degradation. The release of autophagic amino acids allows the maintenance of protein synthesis and viability during nitrogen starvation. The polypeptide is Autophagy-related protein 22-2 (atg22-2) (Neosartorya fischeri (strain ATCC 1020 / DSM 3700 / CBS 544.65 / FGSC A1164 / JCM 1740 / NRRL 181 / WB 181) (Aspergillus fischerianus)).